The following is a 528-amino-acid chain: Ulvan lyase, short isoform (528 aa).

Positions 1-29 (MKINLSMRELVSRLSTTLKTAIALSVLTA) are cleaved as a signal peptide. Cys30 carries N-palmitoyl cysteine lipidation. Cys30 carries S-diacylglycerol cysteine lipidation. A substrate-binding site is contributed by 151–152 (SH). Residue His152 is the Proton donor/acceptor of the active site. Ca(2+)-binding residues include Asp218, Asp228, and Lys230. The substrate site is built by Tyr309 and Arg326. Ca(2+) contacts are provided by Asn329, Asp332, and Phe334. Residue His390 participates in substrate binding.

Belongs to the polysaccharide lyase 24 family.

The protein resides in the secreted. It is found in the cell membrane. Ulvan lyase involved in ulvan degradation. Ulvan is the main polysaccharide component of the Ulvales (green seaweed) cell wall. It is composed of disaccharide building blocks comprising 3-sulfated rhamnose (Rha3S) linked to D-glucuronic acid (GlcA), L-iduronic acid (IduA), or D-xylose (Xyl). Ulvan lyase catalyzes preferentially the endolytic cleavage of the glycosidic bond between Rha3S and the uronic acid GlcA, but not IduA, producing oligosaccharides that have unsaturated 4-deoxy-L-threo-hex-4-enopyranosiduronic acid (deltaUA) at the non-reducing end. The most abundant end products in the degradation of the ulvan polysaccharide were deltaUA-Rha3S disaccharides and deltaUA-Rha3S-IduA-Rha3S and deltaUA-Rha3S-Xyl-Rha3S tetrasaccharides. In Alteromonas sp. (strain LOR), this protein is Ulvan lyase, short isoform.